Here is a 564-residue protein sequence, read N- to C-terminus: MVLYIILAIIVIILIAVGVLFYLRSNKRQIIEKAIERKNEIETLPFDQNLAQLSKLNLKGETKTKYDAMKKDNVESTNKYLAPVEEKIHNAEALLDKFSFNASQSEIDDANELMDSYEQSYQQQLEDVNEIIALYKDNDELYDKCKVDYREMKRDVLANRHQFGEAASLLETEIEKFEPRLEQYEVLKADGNYVQAHNHIAALNEQMKQLRSYMEEIPELIRETQKELPGQFQDLKYGCRDLKVEGYDLDHVKVDSTLQSLKTELSFVEPLISRLELEEANDKLANINDKLDDMYDLIEHEVKAKNDVEETKDIITDNLFKAKDMNYTLQTEIEYVRENYYINESDAQSVRQFENEIQSLISVYDDILKEMSKSAVRYSEVQDNLQYLEDHVTVINDKQEKLQNHLIQLREDEAEAEDNLLRVQSKKEEVYRRLLASNLTSVPERFIIMKNEIDHEVRDVNEQFSERPIHVKQLKDKVSKIVIQMNTFEDEANDVLVNAVYAEKLIQYGNRYRKDYSNVDKSLNEAERLFKNNRYKRAIEIAEQALESVEPGVTKHIEEEVIKQ.

The Extracellular segment spans residues 1–4 (MVLY). Residues 5-23 (IILAIIVIILIAVGVLFYL) form a helical membrane-spanning segment. Over 24–564 (RSNKRQIIEK…KHIEEEVIKQ (541 aa)) the chain is Cytoplasmic. Coiled coils occupy residues 99–138 (SFNA…YKDN), 190–223 (DGNY…LIRE), 271–300 (LISR…LIEH), 350–435 (VRQF…RRLL), and 471–550 (VKQL…ESVE).

Belongs to the EzrA family.

The protein resides in the cell membrane. Its function is as follows. Negative regulator of FtsZ ring formation; modulates the frequency and position of FtsZ ring formation. Inhibits FtsZ ring formation at polar sites. Interacts either with FtsZ or with one of its binding partners to promote depolymerization. The protein is Septation ring formation regulator EzrA of Staphylococcus aureus (strain JH1).